The primary structure comprises 901 residues: Probable dipeptidyl-aminopeptidase B (901 aa).

The segment covering 1-22 (MSSPRPSTSSTSSDSGLSVDTT) has biased composition (low complexity). Residues 1 to 67 (MSSPRPSTSS…EPFLPSAKKQ (67 aa)) form a disordered region. Over 1-76 (MSSPRPSTSS…QAASGSRTSR (76 aa)) the chain is Cytoplasmic. Residues 77-97 (LIWGLVILCVAGWLWGLVLFV) traverse the membrane as a helical; Signal-anchor for type II membrane protein segment. Residues 98 to 901 (TQNRSAQQSV…VKRSLPMLVK (804 aa)) lie on the Vacuolar side of the membrane. N-linked (GlcNAc...) asparagine glycosylation is found at Asn-334 and Asn-625. The active-site Charge relay system is Ser-739. An N-linked (GlcNAc...) asparagine glycan is attached at Asn-793. Residues Asp-816 and His-849 each act as charge relay system in the active site.

The protein belongs to the peptidase S9B family.

It is found in the vacuole membrane. It catalyses the reaction Release of an N-terminal dipeptide, Xaa-Yaa-|-Zaa-, from a polypeptide, preferentially when Yaa is Pro, provided Zaa is neither Pro nor hydroxyproline.. In terms of biological role, type IV dipeptidyl-peptidase which removes N-terminal dipeptides sequentially from polypeptides having unsubstituted N-termini provided that the penultimate residue is proline. In Aspergillus niger (strain ATCC MYA-4892 / CBS 513.88 / FGSC A1513), this protein is Probable dipeptidyl-aminopeptidase B (dapB).